A 1224-amino-acid polypeptide reads, in one-letter code: DNA-directed RNA polymerase subunit beta'' (1224 aa).

Cys-223, Cys-297, Cys-304, and Cys-307 together coordinate Zn(2+).

The protein belongs to the RNA polymerase beta' chain family. RpoC2 subfamily. As to quaternary structure, in plastids the minimal PEP RNA polymerase catalytic core is composed of four subunits: alpha, beta, beta', and beta''. When a (nuclear-encoded) sigma factor is associated with the core the holoenzyme is formed, which can initiate transcription. Requires Zn(2+) as cofactor.

It localises to the plastid. The protein localises to the chloroplast. It carries out the reaction RNA(n) + a ribonucleoside 5'-triphosphate = RNA(n+1) + diphosphate. Its function is as follows. DNA-dependent RNA polymerase catalyzes the transcription of DNA into RNA using the four ribonucleoside triphosphates as substrates. The polypeptide is DNA-directed RNA polymerase subunit beta'' (Porphyra purpurea (Red seaweed)).